The following is an 89-amino-acid chain: Small ribosomal subunit protein uS15 (89 aa).

The tract at residues 1–23 (MTLNTQEKQKLINTHQNHGTDTG) is disordered.

The protein belongs to the universal ribosomal protein uS15 family. As to quaternary structure, part of the 30S ribosomal subunit. Forms a bridge to the 50S subunit in the 70S ribosome, contacting the 23S rRNA.

In terms of biological role, one of the primary rRNA binding proteins, it binds directly to 16S rRNA where it helps nucleate assembly of the platform of the 30S subunit by binding and bridging several RNA helices of the 16S rRNA. Forms an intersubunit bridge (bridge B4) with the 23S rRNA of the 50S subunit in the ribosome. This is Small ribosomal subunit protein uS15 from Prochlorococcus marinus (strain MIT 9211).